A 318-amino-acid chain; its full sequence is Cytochrome c biogenesis protein CcsA (318 aa).

8 consecutive transmembrane segments (helical) span residues 17-37 (VLALGLAAFALLLLAIPISFW), 45-65 (SAVVTLLVALANLVLTAQLVL), 75-95 (ISNLYESLCFLAWACTLAQLL), 104-124 (IVSAAATPMALLCVAFASFAL), 149-169 (VIMCSYAALLVGSFLSMAVLF), 224-244 (TITVGFLLLTLGLISGAVWAN), 258-275 (TWALICWMVYAAYLHTRF), and 287-307 (VAVAGIVVIVVCYIGVNLLGI).

This sequence belongs to the CcmF/CycK/Ccl1/NrfE/CcsA family. As to quaternary structure, may interact with ccs1.

It is found in the cellular thylakoid membrane. Its function is as follows. Required during biogenesis of c-type cytochromes (cytochrome c6 and cytochrome f) at the step of heme attachment. This Prochlorococcus marinus (strain MIT 9303) protein is Cytochrome c biogenesis protein CcsA.